A 205-amino-acid polypeptide reads, in one-letter code: N-(5'-phosphoribosyl)anthranilate isomerase (205 aa).

It belongs to the TrpF family.

It carries out the reaction N-(5-phospho-beta-D-ribosyl)anthranilate = 1-(2-carboxyphenylamino)-1-deoxy-D-ribulose 5-phosphate. Its pathway is amino-acid biosynthesis; L-tryptophan biosynthesis; L-tryptophan from chorismate: step 3/5. The sequence is that of N-(5'-phosphoribosyl)anthranilate isomerase (TRP1) from Zygosaccharomyces bailii.